We begin with the raw amino-acid sequence, 417 residues long: D-amino acid dehydrogenase (417 aa).

3–17 (VVILGSGVIGVTSAW) lines the FAD pocket.

It belongs to the DadA oxidoreductase family. FAD serves as cofactor.

It catalyses the reaction a D-alpha-amino acid + A + H2O = a 2-oxocarboxylate + AH2 + NH4(+). Its pathway is amino-acid degradation; D-alanine degradation; NH(3) and pyruvate from D-alanine: step 1/1. Its function is as follows. Oxidative deamination of D-amino acids. The polypeptide is D-amino acid dehydrogenase (Edwardsiella ictaluri (strain 93-146)).